The primary structure comprises 2057 residues: Rho guanine nucleotide exchange factor 17 (2057 aa).

Disordered regions lie at residues 20–361 (ERWS…DTGG), 375–461 (LASP…SNPD), and 481–559 (RVRK…LKPS). Residues S142 and S152 each carry the phosphoserine modification. A compositionally biased stretch (low complexity) spans 227-249 (ARASSSSSIASSYPVSRSRAASS). S305 and S308 each carry phosphoserine. Gly residues predominate over residues 314-323 (GGLGSAGGVG). A phosphoserine mark is found at S324, S330, S377, S381, S389, S404, and S414. Polar residues predominate over residues 382–391 (RGSSRYSSTE). Over residues 440-451 (PLRDGGLDLDKN) the composition is skewed to basic and acidic residues. S456 bears the Phosphoserine mark. Positions 507–524 (EQSESTLSQSPTSPTTRP) are enriched in low complexity. S538 and S611 each carry phosphoserine. Disordered stretches follow at residues 615-647 (AGDMTQGHRSQEELSGPESNLTDEGIGADPEPL) and 663-952 (LSST…VRHA). Over residues 663–672 (LSSTSAQTNH) the composition is skewed to polar residues. Position 689 is a phosphoserine (S689). 2 positions are modified to phosphothreonine: T692 and T695. Polar residues predominate over residues 710-719 (PNGTELSNGE). S728 carries the post-translational modification Phosphoserine. The span at 747–760 (SVDSNLLGSLNSKT) shows a compositional bias: polar residues. Residues 820 to 829 (SLSDPSRRGE) are compositionally biased toward basic and acidic residues. The residue at position 906 (S906) is a Phosphoserine. Residues 909–920 (LTRRGSKKRPAR) show a composition bias toward basic residues. Residues 922-931 (SHQELRREEG) are compositionally biased toward basic and acidic residues. Over residues 933–944 (QDQTGSLTQTRS) the composition is skewed to polar residues. Phosphoserine is present on residues S953 and S994. The segment covering 1015–1027 (GPVDLPCLPPSAP) has biased composition (pro residues). Positions 1015 to 1054 (GPVDLPCLPPSAPPSTETKPSGAARATPDEPAPASKCCSK) are disordered. The DH domain maps to 1059–1247 (MRKHVTMTLL…KQVAERINKG (189 aa)). Phosphoserine is present on S1324. Disordered stretches follow at residues 1555–1713 (RCPR…SSRG) and 1983–2050 (CSTP…DSTN). Residues 1579-1589 (LDVEATAEEEA) are compositionally biased toward acidic residues. Residues 1638 to 1674 (SPSPSGTLQSQASQSTISSSFGNEETPSSKEATAETT) show a composition bias toward low complexity.

Acts as a guanine nucleotide exchange factor (GEF) for RhoA GTPases. The polypeptide is Rho guanine nucleotide exchange factor 17 (Arhgef17) (Mus musculus (Mouse)).